A 532-amino-acid chain; its full sequence is Monolignol oxidoreductase AtBBE-like 15 (532 aa).

The N-terminal stretch at 1-27 (MAFAISKRNATLFLVTLLLISVPLSSS) is a signal peptide. Cysteines 36 and 100 form a disulfide. Asn-57 carries an N-linked (GlcNAc...) asparagine glycan. The FAD-binding PCMH-type domain occupies 76–254 (TPSNPKPVFI…LAWKIKLVPV (179 aa)). Positions 115-179 (HDYEGLSFVA…QTHGFPAGLC (65 aa)) form a cross-link, 6-(S-cysteinyl)-8alpha-(pros-histidyl)-FAD (His-Cys). 2 N-linked (GlcNAc...) asparagine glycosylation sites follow: Asn-306 and Asn-431.

Belongs to the oxygen-dependent FAD-linked oxidoreductase family. Requires FAD as cofactor. The FAD cofactor is bound via a bicovalent 6-S-cysteinyl, 8alpha-N1-histidyl FAD linkage. As to expression, expressed in sepals and stamen.

Its subcellular location is the secreted. It is found in the cell wall. The enzyme catalyses (E)-4-coumaroyl alcohol + A = (E)-4-coumaraldehyde + AH2. It catalyses the reaction (E)-coniferol + A = (E)-coniferaldehyde + AH2. It carries out the reaction (E)-sinapyl alcohol + A = (E)-sinapaldehyde + AH2. The catalysed reaction is 4-O-(beta-D-glucosyl)-(E)-coniferol + A = 4-O-(beta-D-glucosyl)-4-(E)-coniferyl aldehyde + AH2. Its function is as follows. Required for endosperm development and polar nuclei fusion. Mediates oxidation of p-hydroxylated derivatives of cinnamyl alcohol (i.e. the monolignols p-coumaryl-, coniferyl-, and sinapyl alcohol) to their corresponding aldehydes. Can also use the beta-O-glycosylated form of coniferyl alcohol (coniferin) as substrate, but is much less efficient towards cinnamyl alcohol. The electron acceptor required for these reactions is not known, but does not seem to be dioxygen. The protein is Monolignol oxidoreductase AtBBE-like 15 of Arabidopsis thaliana (Mouse-ear cress).